Consider the following 747-residue polypeptide: Ubiquitin carboxyl-terminal hydrolase 13 (747 aa).

One can recognise a USP domain in the interval Phe-140 to Met-668. Cys-149 acts as the Nucleophile in catalysis. 2 disordered regions span residues Pro-172–Asp-305 and Tyr-318–Ser-367. Residues Lys-174–Lys-183 are compositionally biased toward basic and acidic residues. The residue at position 198 (Ser-198) is a Phosphoserine. Polar residues predominate over residues Pro-225–Gly-235. Over residues His-251 to Gly-260 the composition is skewed to basic and acidic residues. Over residues Glu-319–Thr-343 the composition is skewed to polar residues. His-619 serves as the catalytic Proton acceptor.

It belongs to the peptidase C19 family.

The enzyme catalyses Thiol-dependent hydrolysis of ester, thioester, amide, peptide and isopeptide bonds formed by the C-terminal Gly of ubiquitin (a 76-residue protein attached to proteins as an intracellular targeting signal).. This Saccharomyces cerevisiae (strain ATCC 204508 / S288c) (Baker's yeast) protein is Ubiquitin carboxyl-terminal hydrolase 13 (UBP13).